The following is a 655-amino-acid chain: tRNA 5-methylaminomethyl-2-thiouridine biosynthesis bifunctional protein MnmC (655 aa).

The tract at residues 1-236 is tRNA (mnm(5)s(2)U34)-methyltransferase; that stretch reads MTDPLVPAVL…KRAMLVGRFA (236 aa). The FAD-dependent cmnm(5)s(2)U34 oxidoreductase stretch occupies residues 260–655; sequence IGTGLAGCAA…LRALRQGTAS (396 aa).

This sequence in the N-terminal section; belongs to the methyltransferase superfamily. tRNA (mnm(5)s(2)U34)-methyltransferase family. In the C-terminal section; belongs to the DAO family. The cofactor is FAD.

It localises to the cytoplasm. The catalysed reaction is 5-aminomethyl-2-thiouridine(34) in tRNA + S-adenosyl-L-methionine = 5-methylaminomethyl-2-thiouridine(34) in tRNA + S-adenosyl-L-homocysteine + H(+). In terms of biological role, catalyzes the last two steps in the biosynthesis of 5-methylaminomethyl-2-thiouridine (mnm(5)s(2)U) at the wobble position (U34) in tRNA. Catalyzes the FAD-dependent demodification of cmnm(5)s(2)U34 to nm(5)s(2)U34, followed by the transfer of a methyl group from S-adenosyl-L-methionine to nm(5)s(2)U34, to form mnm(5)s(2)U34. The protein is tRNA 5-methylaminomethyl-2-thiouridine biosynthesis bifunctional protein MnmC of Paraburkholderia phymatum (strain DSM 17167 / CIP 108236 / LMG 21445 / STM815) (Burkholderia phymatum).